The sequence spans 378 residues: Queuine tRNA-ribosyltransferase (378 aa).

Residue Asp91 is the Proton acceptor of the active site. Substrate is bound by residues 91–95 (DSGGF), Asp145, Gln189, and Gly216. Residues 247 to 253 (GVGKPED) form an RNA binding region. Asp266 functions as the Nucleophile in the catalytic mechanism. The segment at 271 to 275 (TRNAR) is RNA binding; important for wobble base 34 recognition. Residues Cys304, Cys306, Cys309, and His335 each contribute to the Zn(2+) site.

This sequence belongs to the queuine tRNA-ribosyltransferase family. In terms of assembly, homodimer. Within each dimer, one monomer is responsible for RNA recognition and catalysis, while the other monomer binds to the replacement base PreQ1. The cofactor is Zn(2+).

It catalyses the reaction 7-aminomethyl-7-carbaguanine + guanosine(34) in tRNA = 7-aminomethyl-7-carbaguanosine(34) in tRNA + guanine. The protein operates within tRNA modification; tRNA-queuosine biosynthesis. Functionally, catalyzes the base-exchange of a guanine (G) residue with the queuine precursor 7-aminomethyl-7-deazaguanine (PreQ1) at position 34 (anticodon wobble position) in tRNAs with GU(N) anticodons (tRNA-Asp, -Asn, -His and -Tyr). Catalysis occurs through a double-displacement mechanism. The nucleophile active site attacks the C1' of nucleotide 34 to detach the guanine base from the RNA, forming a covalent enzyme-RNA intermediate. The proton acceptor active site deprotonates the incoming PreQ1, allowing a nucleophilic attack on the C1' of the ribose to form the product. After dissociation, two additional enzymatic reactions on the tRNA convert PreQ1 to queuine (Q), resulting in the hypermodified nucleoside queuosine (7-(((4,5-cis-dihydroxy-2-cyclopenten-1-yl)amino)methyl)-7-deazaguanosine). This Vibrio atlanticus (strain LGP32) (Vibrio splendidus (strain Mel32)) protein is Queuine tRNA-ribosyltransferase.